Consider the following 297-residue polypeptide: 4-hydroxy-tetrahydrodipicolinate synthase (297 aa).

Thr47 contributes to the pyruvate binding site. Tyr136 (proton donor/acceptor) is an active-site residue. Residue Lys165 is the Schiff-base intermediate with substrate of the active site. A pyruvate-binding site is contributed by Ile206.

The protein belongs to the DapA family. As to quaternary structure, homotetramer; dimer of dimers.

The protein localises to the cytoplasm. The catalysed reaction is L-aspartate 4-semialdehyde + pyruvate = (2S,4S)-4-hydroxy-2,3,4,5-tetrahydrodipicolinate + H2O + H(+). The protein operates within amino-acid biosynthesis; L-lysine biosynthesis via DAP pathway; (S)-tetrahydrodipicolinate from L-aspartate: step 3/4. Catalyzes the condensation of (S)-aspartate-beta-semialdehyde [(S)-ASA] and pyruvate to 4-hydroxy-tetrahydrodipicolinate (HTPA). The chain is 4-hydroxy-tetrahydrodipicolinate synthase from Campylobacter concisus (strain 13826).